The sequence spans 124 residues: Small ribosomal subunit protein uS13 (124 aa).

Residues 95–124 form a disordered region; that stretch reads GLPVRGQRTHTNARTRKGPRRSVMGKRKKA.

Belongs to the universal ribosomal protein uS13 family. As to quaternary structure, part of the 30S ribosomal subunit. Forms a loose heterodimer with protein S19. Forms two bridges to the 50S subunit in the 70S ribosome.

In terms of biological role, located at the top of the head of the 30S subunit, it contacts several helices of the 16S rRNA. In the 70S ribosome it contacts the 23S rRNA (bridge B1a) and protein L5 of the 50S subunit (bridge B1b), connecting the 2 subunits; these bridges are implicated in subunit movement. Contacts the tRNAs in the A and P-sites. The chain is Small ribosomal subunit protein uS13 from Syntrophobacter fumaroxidans (strain DSM 10017 / MPOB).